The chain runs to 92 residues: Phospholemman (92 aa).

A signal peptide spans 1 to 20 (MAYLHHTLLVCMGLLAMANA). Residues 22 to 35 (APQEQDPFTYDYQS) are Extracellular-facing. A helical transmembrane segment spans residues 36–56 (LRIGGLIIAGILFILGILIIL). Residues 57–92 (KRGAWERFDTARRTGEPDEEEGTFRSSIRRLSTRRR) lie on the Cytoplasmic side of the membrane. The disordered stretch occupies residues 67 to 92 (ARRTGEPDEEEGTFRSSIRRLSTRRR). Phosphothreonine is present on threonine 79. Serine 82 carries the phosphoserine modification. Serine 83 bears the Phosphoserine; by PKA and PKC mark. The span at 83 to 92 (SIRRLSTRRR) shows a compositional bias: basic residues. The residue at position 88 (serine 88) is a Phosphoserine; by PKA. Threonine 89 carries the post-translational modification Phosphothreonine; by PKC.

It belongs to the FXYD family. As to quaternary structure, homotetramer. Monomer. Regulatory subunit of the sodium/potassium-transporting ATPase (NKA) which is composed of a catalytic alpha subunit, a non-catalytic beta subunit and an additional regulatory subunit. The monomeric form associates with NKA while the oligomeric form does not. Interacts with the catalytic alpha-1 subunit ATP1A1. Also interacts with the catalytic alpha-2 and alpha-3 subunits ATP1A2 and ATP1A3. Very little interaction with ATP1A1, ATP1A2 or ATP1A3 when phosphorylated at Ser-83. Interacts with the non-catalytic beta-1 subunit ATP1B1. Oxidative stress decreases interaction with ATP1A1 but increases interaction with ATP1B1. In terms of processing, major plasma membrane substrate for cAMP-dependent protein kinase (PKA) and protein kinase C (PKC) in several different tissues. Phosphorylated in response to insulin and adrenergic stimulation. Phosphorylation at Ser-88 stimulates sodium/potassium-transporting ATPase activity while the unphosphorylated form inhibits sodium/potassium-transporting ATPase activity. Phosphorylation increases tetramerization, decreases binding to ATP1A1 and reduces inhibition of ATP1A1 activity. Phosphorylation at Ser-83 leads to greatly reduced interaction with ATP1A1, ATP1A2 and ATP1A3. May be phosphorylated by DMPK. Palmitoylation increases half-life and stability and is enhanced upon phosphorylation at Ser-88 by PKA. Post-translationally, glutathionylated. Expressed in ventricular myocytes (at protein level).

Its subcellular location is the cell membrane. It localises to the sarcolemma. The protein resides in the apical cell membrane. The protein localises to the membrane. It is found in the caveola. Its subcellular location is the T-tubule. Its function is as follows. Associates with and regulates the activity of the sodium/potassium-transporting ATPase (NKA) which transports Na(+) out of the cell and K(+) into the cell. Inhibits NKA activity in its unphosphorylated state and stimulates activity when phosphorylated. Reduces glutathionylation of the NKA beta-1 subunit ATP1B1, thus reversing glutathionylation-mediated inhibition of ATP1B1. Contributes to female sexual development by maintaining the excitability of neurons which secrete gonadotropin-releasing hormone. This is Phospholemman from Oryctolagus cuniculus (Rabbit).